We begin with the raw amino-acid sequence, 189 residues long: Chitin synthase 2 (189 aa).

The protein belongs to the chitin synthase family. Class II subfamily.

Its subcellular location is the cell membrane. The enzyme catalyses [(1-&gt;4)-N-acetyl-beta-D-glucosaminyl](n) + UDP-N-acetyl-alpha-D-glucosamine = [(1-&gt;4)-N-acetyl-beta-D-glucosaminyl](n+1) + UDP + H(+). In terms of biological role, polymerizes chitin, a structural polymer of the cell wall and septum, by transferring the sugar moiety of UDP-GlcNAc to the non-reducing end of the growing chitin polymer. In Aspergillus niger, this protein is Chitin synthase 2 (chs2).